A 101-amino-acid chain; its full sequence is Small ribosomal subunit protein uS10 (101 aa).

Belongs to the universal ribosomal protein uS10 family. In terms of assembly, part of the 30S ribosomal subunit.

Its function is as follows. Involved in the binding of tRNA to the ribosomes. This is Small ribosomal subunit protein uS10 from Ureaplasma parvum serovar 3 (strain ATCC 27815 / 27 / NCTC 11736).